Consider the following 461-residue polypeptide: RCC1-like G exchanging factor-like protein (461 aa).

The span at 1-10 shows a compositional bias: low complexity; sequence MLAAARALRG. A mitochondrion-targeting transit peptide spans 1–34; sequence MLAAARALRGPRPRWPTPAREHWTPAGRSRSRRE. Positions 1 to 35 are disordered; that stretch reads MLAAARALRGPRPRWPTPAREHWTPAGRSRSRREA. 7 RCC1 repeats span residues 55–121, 125–188, 190–244, 245–297, 298–350, 352–408, and 409–458; these read ADRV…LSSK, VTKV…VLTD, EGVF…FLTD, KGEV…ALSA, DGGV…VLNA, GHVF…ALTN, and KGEL…TLAK.

Forms a regulatory protein-RNA complex, consisting of RCC1L, NGRN, RPUSD3, RPUSD4, TRUB2, FASTKD2 and 16S mt-rRNA. Interacts with 16S mt-rRNA; this interaction is direct. Interacts with OPA1; this interaction is direct. As to expression, at E8.5, broadly expressed in yolk sac placenta, decidua, and embryo, with highest levels found in the trophoblast giant cells (TGCs) and ectoplacental cone (at protein level).

Its subcellular location is the mitochondrion inner membrane. Its function is as follows. Guanine nucleotide exchange factor (GEF) for mitochondrial dynamin-related GTPase OPA1. Activates OPA1, by exchanging bound GDP for free GTP, and drives OPA1 and MFN1-dependent mitochondrial fusion. Plays an essential role in mitochondrial ribosome biogenesis. As a component of a functional protein-RNA module, consisting of RCC1L, NGRN, RPUSD3, RPUSD4, TRUB2, FASTKD2 and 16S mitochondrial ribosomal RNA (16S mt-rRNA), controls 16S mt-rRNA abundance and is required for intra-mitochondrial translation of core subunits of the oxidative phosphorylation system. This Mus musculus (Mouse) protein is RCC1-like G exchanging factor-like protein.